The primary structure comprises 550 residues: CTP synthase (550 aa).

The interval Met1–Leu272 is amidoligase domain. Position 14 (Ser14) interacts with CTP. Ser14 provides a ligand contact to UTP. An ATP-binding site is contributed by Ser15 to Leu20. Tyr55 provides a ligand contact to L-glutamine. ATP is bound at residue Asp72. Mg(2+) contacts are provided by Asp72 and Glu146. Residues Asp153 to Glu155, Lys193 to Gln198, and Lys229 each bind CTP. Residues Lys193–Gln198 and Lys229 contribute to the UTP site. Positions Thr297–Gln550 constitute a Glutamine amidotransferase type-1 domain. Residue Gly359 participates in L-glutamine binding. Cys386 (nucleophile; for glutamine hydrolysis) is an active-site residue. L-glutamine contacts are provided by residues Leu387–Gln390, Glu410, and Arg478. Residues His523 and Glu525 contribute to the active site.

The protein belongs to the CTP synthase family. Homotetramer.

The enzyme catalyses UTP + L-glutamine + ATP + H2O = CTP + L-glutamate + ADP + phosphate + 2 H(+). It catalyses the reaction L-glutamine + H2O = L-glutamate + NH4(+). It carries out the reaction UTP + NH4(+) + ATP = CTP + ADP + phosphate + 2 H(+). The protein operates within pyrimidine metabolism; CTP biosynthesis via de novo pathway; CTP from UDP: step 2/2. With respect to regulation, allosterically activated by GTP, when glutamine is the substrate; GTP has no effect on the reaction when ammonia is the substrate. The allosteric effector GTP functions by stabilizing the protein conformation that binds the tetrahedral intermediate(s) formed during glutamine hydrolysis. Inhibited by the product CTP, via allosteric rather than competitive inhibition. Its function is as follows. Catalyzes the ATP-dependent amination of UTP to CTP with either L-glutamine or ammonia as the source of nitrogen. Regulates intracellular CTP levels through interactions with the four ribonucleotide triphosphates. This is CTP synthase from Lawsonia intracellularis (strain PHE/MN1-00).